Consider the following 190-residue polypeptide: Small ribosomal subunit protein mS23 (190 aa).

At Ala2 the chain carries N-acetylalanine. Position 102 is an N6-acetyllysine (Lys102). The segment at 139–190 is disordered; it reads RTQHGGSHVSRKSEHLSVRPQTALEENETQKEVPQDQHLEAPADQSKGLLPP. Basic and acidic residues predominate over residues 166-179; that stretch reads ETQKEVPQDQHLEA.

This sequence belongs to the mitochondrion-specific ribosomal protein mS23 family. As to quaternary structure, component of the mitochondrial small ribosomal subunit (mt-SSU). Mature mammalian 55S mitochondrial ribosomes consist of a small (28S) and a large (39S) subunit. The 28S small subunit contains a 12S ribosomal RNA (12S mt-rRNA) and 30 different proteins. The 39S large subunit contains a 16S rRNA (16S mt-rRNA), a copy of mitochondrial valine transfer RNA (mt-tRNA(Val)), which plays an integral structural role, and 52 different proteins.

It is found in the mitochondrion. This chain is Small ribosomal subunit protein mS23 (MRPS23), found in Homo sapiens (Human).